Here is a 1262-residue protein sequence, read N- to C-terminus: Cytoplasmic FMR1-interacting protein homolog (1262 aa).

Residues L519 to R550 are disordered.

The protein belongs to the CYFIP family. As to quaternary structure, interacts with gex-3.

The protein localises to the cytoplasm. Required for initial steps of body morphogenesis. May play a role in egg laying and yolk protein clatherin-mediated endocytosis by oocytes during oogenesis. Plays a role in the formation of muscle connections, also called muscle arm extensions, between the body wall and the motor axons in the dorsal and ventral cord. This Caenorhabditis elegans protein is Cytoplasmic FMR1-interacting protein homolog.